The chain runs to 337 residues: Pyridoxal 5'-phosphate synthase subunit PdxS (337 aa).

Aspartate 65 contacts D-ribose 5-phosphate. Lysine 122 (schiff-base intermediate with D-ribose 5-phosphate) is an active-site residue. Glycine 194 contributes to the D-ribose 5-phosphate binding site. Lysine 206 is a D-glyceraldehyde 3-phosphate binding site. Residues glycine 255 and 276–277 (GS) each bind D-ribose 5-phosphate.

It belongs to the PdxS/SNZ family. As to quaternary structure, in the presence of PdxT, forms a dodecamer of heterodimers.

The catalysed reaction is aldehydo-D-ribose 5-phosphate + D-glyceraldehyde 3-phosphate + L-glutamine = pyridoxal 5'-phosphate + L-glutamate + phosphate + 3 H2O + H(+). The protein operates within cofactor biosynthesis; pyridoxal 5'-phosphate biosynthesis. In terms of biological role, catalyzes the formation of pyridoxal 5'-phosphate from ribose 5-phosphate (RBP), glyceraldehyde 3-phosphate (G3P) and ammonia. The ammonia is provided by the PdxT subunit. Can also use ribulose 5-phosphate and dihydroxyacetone phosphate as substrates, resulting from enzyme-catalyzed isomerization of RBP and G3P, respectively. The chain is Pyridoxal 5'-phosphate synthase subunit PdxS from Pyrobaculum arsenaticum (strain DSM 13514 / JCM 11321 / PZ6).